Here is a 120-residue protein sequence, read N- to C-terminus: Large ribosomal subunit protein bL20 (120 aa).

This sequence belongs to the bacterial ribosomal protein bL20 family.

Binds directly to 23S ribosomal RNA and is necessary for the in vitro assembly process of the 50S ribosomal subunit. It is not involved in the protein synthesizing functions of that subunit. This chain is Large ribosomal subunit protein bL20, found in Mesoplasma florum (strain ATCC 33453 / NBRC 100688 / NCTC 11704 / L1) (Acholeplasma florum).